A 323-amino-acid chain; its full sequence is Fructose-1,6-bisphosphatase class 1 (323 aa).

Residues E88, D107, L109, and D110 each contribute to the Mg(2+) site. Substrate contacts are provided by residues 110–113 and N200; that span reads DGSS. Residue E272 coordinates Mg(2+).

This sequence belongs to the FBPase class 1 family. In terms of assembly, homotetramer. Mg(2+) is required as a cofactor.

Its subcellular location is the cytoplasm. It carries out the reaction beta-D-fructose 1,6-bisphosphate + H2O = beta-D-fructose 6-phosphate + phosphate. Its pathway is carbohydrate biosynthesis; gluconeogenesis. The sequence is that of Fructose-1,6-bisphosphatase class 1 from Acinetobacter baylyi (strain ATCC 33305 / BD413 / ADP1).